We begin with the raw amino-acid sequence, 264 residues long: Tryptophan synthase alpha chain (264 aa).

Active-site proton acceptor residues include Glu-45 and Asp-56.

The protein belongs to the TrpA family. As to quaternary structure, tetramer of two alpha and two beta chains.

It carries out the reaction (1S,2R)-1-C-(indol-3-yl)glycerol 3-phosphate + L-serine = D-glyceraldehyde 3-phosphate + L-tryptophan + H2O. It participates in amino-acid biosynthesis; L-tryptophan biosynthesis; L-tryptophan from chorismate: step 5/5. Functionally, the alpha subunit is responsible for the aldol cleavage of indoleglycerol phosphate to indole and glyceraldehyde 3-phosphate. The sequence is that of Tryptophan synthase alpha chain from Leptospira borgpetersenii serovar Hardjo-bovis (strain JB197).